The following is a 141-amino-acid chain: Large ribosomal subunit protein uL11 (141 aa).

The protein belongs to the universal ribosomal protein uL11 family. In terms of assembly, part of the ribosomal stalk of the 50S ribosomal subunit. Interacts with L10 and the large rRNA to form the base of the stalk. L10 forms an elongated spine to which L12 dimers bind in a sequential fashion forming a multimeric L10(L12)X complex. One or more lysine residues are methylated.

Forms part of the ribosomal stalk which helps the ribosome interact with GTP-bound translation factors. The protein is Large ribosomal subunit protein uL11 of Gloeobacter violaceus (strain ATCC 29082 / PCC 7421).